The primary structure comprises 373 residues: tRNA-specific 2-thiouridylase MnmA (373 aa).

ATP contacts are provided by residues 12–19 (GMSGGVDS) and Met-38. Positions 98-100 (NPD) are interaction with target base in tRNA. Cys-103 serves as the catalytic Nucleophile. A disulfide bridge links Cys-103 with Cys-200. Gly-127 is an ATP binding site. The interval 150 to 152 (KDQ) is interaction with tRNA. The active-site Cysteine persulfide intermediate is Cys-200. The tract at residues 312–313 (RY) is interaction with tRNA.

It belongs to the MnmA/TRMU family.

It is found in the cytoplasm. The enzyme catalyses S-sulfanyl-L-cysteinyl-[protein] + uridine(34) in tRNA + AH2 + ATP = 2-thiouridine(34) in tRNA + L-cysteinyl-[protein] + A + AMP + diphosphate + H(+). In terms of biological role, catalyzes the 2-thiolation of uridine at the wobble position (U34) of tRNA, leading to the formation of s(2)U34. This chain is tRNA-specific 2-thiouridylase MnmA, found in Streptococcus pneumoniae (strain 70585).